The primary structure comprises 214 residues: Adenylate kinase (214 aa).

Residue 10–15 (GVGKGT) participates in ATP binding. The NMP stretch occupies residues 30–59 (STGDILRAAVKELTPMGAKAKGYMDSGALV). AMP contacts are provided by residues T31, R36, 57-59 (ALV), 85-88 (GFPR), and Q92. An LID region spans residues 126-163 (GRRACANCGAGYHVDFAPSKVAGVCDACSGQLVQREDD). Residue R127 participates in ATP binding. Positions 130, 133, 150, and 153 each coordinate Zn(2+). Residues R160 and R171 each coordinate AMP. Residue G199 participates in ATP binding.

This sequence belongs to the adenylate kinase family. Monomer.

The protein localises to the cytoplasm. It catalyses the reaction AMP + ATP = 2 ADP. It functions in the pathway purine metabolism; AMP biosynthesis via salvage pathway; AMP from ADP: step 1/1. Catalyzes the reversible transfer of the terminal phosphate group between ATP and AMP. Plays an important role in cellular energy homeostasis and in adenine nucleotide metabolism. The chain is Adenylate kinase from Citrifermentans bemidjiense (strain ATCC BAA-1014 / DSM 16622 / JCM 12645 / Bem) (Geobacter bemidjiensis).